The primary structure comprises 685 residues: Phenoloxidase subunit 1 (685 aa).

Cu cation is bound by residues His209, His213, and His239. Glu351 acts as the Proton acceptor in catalysis. 3 residues coordinate Cu cation: His366, His370, and His406. Disulfide bonds link Cys580-Cys622 and Cys582-Cys629.

Heterodimer. Forms a complex with an interleukin 1-like protein as a consequence of a host defense response. Cu(2+) is required as a cofactor. In terms of processing, the N-terminus is blocked. Synthesized by oenocytoids, a type of hemocyte, and released into the hemolymph plasma.

The protein localises to the secreted. The catalysed reaction is 2 L-dopa + O2 = 2 L-dopaquinone + 2 H2O. The enzyme catalyses L-tyrosine + O2 = L-dopaquinone + H2O. Its activity is regulated as follows. Activated by immulectin and lipopolysaccharide. This is a copper-containing oxidase that functions in the formation of pigments such as melanins and other polyphenolic compounds. Catalyzes the rate-limiting conversions of tyrosine to DOPA, DOPA to DOPA-quinone and possibly 5,6 dihydroxyindole to indole-5'6 quinone. Binds to the surface of hemocytes and is involved in hemocyte melanization. The polypeptide is Phenoloxidase subunit 1 (Manduca sexta (Tobacco hawkmoth)).